Here is a 358-residue protein sequence, read N- to C-terminus: Putative glycylpeptide N-tetradecanoyltransferase (358 aa).

Belongs to the NMT family.

It carries out the reaction N-terminal glycyl-[protein] + tetradecanoyl-CoA = N-tetradecanoylglycyl-[protein] + CoA + H(+). Adds a myristoyl group to the N-terminal glycine residue of certain proteins. The chain is Putative glycylpeptide N-tetradecanoyltransferase from Acanthamoeba polyphaga (Amoeba).